The sequence spans 292 residues: MQKYEKLEKIGEGTYGTVFKAKNRETHEIVALKRVRLDDDDEGVPSSALREICLLKELKHKNIVRLHDVLHSDKKLTLVFEFCDQDLKKYFDSCNGDLDPEIVKSLLFQLLKGLGFCHSRNVLHRDLKPQNLLINRNGELKLADFGLARAFGIPVRCYSAEVVTLWYRPPDVLFGAKLYSTSIDMWSAGCIFAELANAGRPLFPGNDVDDQLKRIFRLLGTPTEEQWPAMTKLPDYKPYPMYPATTSLVNVVPKLNATGRDLLQNLLKCNPVQRISAEEALQHPYFSDFCPP.

A Protein kinase domain is found at 4-286; sequence YEKLEKIGEG…AEEALQHPYF (283 aa). Residues 10-18 and lysine 33 contribute to the ATP site; that span reads IGEGTYGTV. Tyrosine 15 carries the phosphotyrosine; by ABL1, EPHA4 and FYN modification. Threonine 17 bears the Phosphothreonine mark. Lysine 56 is subject to N6-acetyllysine. A Phosphoserine modification is found at serine 72. Aspartate 126 serves as the catalytic Proton acceptor. Serine 159 is subject to Phosphoserine.

This sequence belongs to the protein kinase superfamily. CMGC Ser/Thr protein kinase family. CDC2/CDKX subfamily. In terms of assembly, heterodimer composed of a catalytic subunit CDK5 and a regulatory subunit CDK5R1 (p25) and macromolecular complex composed of at least CDK5, CDK5R1 (p35) and CDK5RAP1 or CDK5RAP2 or CDK5RAP3. Only the heterodimer shows kinase activity. Under neurotoxic stress and neuronal injury conditions, p35 is cleaved by calpain to generate p25 that hyperactivates CDK5, that becomes functionally disabled and often toxic. Found in a trimolecular complex with CABLES1 and ABL1. Interacts with CABLES1 and CABLES2. Interacts with AATK and GSTP1. Binds to HDAC1 when in complex with p25. Interaction with myristoylation p35 promotes CDK5 association with membranes. Both isoforms 1 and 2 interacts with beta-catenin/CTNNB1. Interacts with delta-catenin/CTNND2 and APEX1. Interacts with P53/TP53 in neurons. Interacts with PTK2/FAK1. Interacts with EPHA4; may mediate the activation of NGEF by EPHA4. The complex p35/CDK5 interacts with CLOCK. Interacts with HTR6. In terms of processing, phosphorylation on Tyr-15 by ABL1 and FYN, and on Ser-159 by casein kinase 1 promotes kinase activity. By contrast, phosphorylation at Thr-14 inhibits activity. Post-translationally, phosphorylation at Ser-159 is essential for maximal catalytic activity. As to expression, expressed in hippocampal neuronal synaptic termini (at protein level). Expressed predominantly in post-mitotic neurons of the central and peripheral nervous system.

It is found in the cytoplasm. The protein localises to the nucleus. It localises to the cell membrane. Its subcellular location is the perikaryon. The protein resides in the cell projection. It is found in the lamellipodium. The protein localises to the growth cone. It localises to the postsynaptic density. Its subcellular location is the synapse. It carries out the reaction L-seryl-[protein] + ATP = O-phospho-L-seryl-[protein] + ADP + H(+). The catalysed reaction is L-threonyl-[protein] + ATP = O-phospho-L-threonyl-[protein] + ADP + H(+). With respect to regulation, inhibited by 2-(1-ethyl-2-hydroxyethylamino)-6-benzylamino-9-isopropylpurine (roscovitine), 1-isopropyl-4-aminobenzyl-6-ether-linked benzimidazoles, resveratrol, AT-7519 and olomoucine. Activated by CDK5R1 (p35) and CDK5R2 (p39) during the development of the nervous system; degradation of CDK5R1 (p35) and CDK5R2 (p39) by proteasome result in down regulation of kinase activity, during this process, CDK5 phosphorylates p35 and induces its ubiquitination and subsequent degradation. Kinase activity is mainly determined by the amount of p35 available and subcellular location; reversible association to plasma membrane inhibits activity. Long-term inactivation as well as CDK5R1 (p25)-mediated hyperactivation of CDK5 triggers cell death. The pro-death activity of hyperactivated CDK5 is suppressed by membrane association of CDK5, via myristoylation of p35. Brain-derived neurotrophic factor, glial-derived neurotrophic factor, nerve growth factor (NGF), retinoic acid, laminin and neuregulin promote activity. Neurotoxicity enhances nuclear activity, thus leading to MEF2 phosphorylation and inhibition prior to apoptosis of cortical neurons. Repression by GSTP1 via p25/p35 translocation prevents neurodegeneration. Functionally, proline-directed serine/threonine-protein kinase essential for neuronal cell cycle arrest and differentiation and may be involved in apoptotic cell death in neuronal diseases by triggering abortive cell cycle re-entry. Interacts with D1 and D3-type G1 cyclins. Phosphorylates SRC, NOS3, VIM/vimentin, p35/CDK5R1, MEF2A, SIPA1L1, SH3GLB1, PXN, PAK1, MCAM/MUC18, SEPT5, SYN1, DNM1, AMPH, SYNJ1, CDK16, RAC1, RHOA, CDC42, TONEBP/NFAT5, MAPT/TAU, MAP1B, histone H1, p53/TP53, HDAC1, APEX1, PTK2/FAK1, huntingtin/HTT, ATM, MAP2, NEFH and NEFM. Regulates several neuronal development and physiological processes including neuronal survival, migration and differentiation, axonal and neurite growth, synaptogenesis, oligodendrocyte differentiation, synaptic plasticity and neurotransmission, by phosphorylating key proteins. Negatively regulates the CACNA1B/CAV2.2 -mediated Ca(2+) release probability at hippocampal neuronal soma and synaptic terminals. Activated by interaction with CDK5R1 (p35) and CDK5R2 (p39), especially in postmitotic neurons, and promotes CDK5R1 (p35) expression in an autostimulation loop. Phosphorylates many downstream substrates such as Rho and Ras family small GTPases (e.g. PAK1, RAC1, RHOA, CDC42) or microtubule-binding proteins (e.g. MAPT/TAU, MAP2, MAP1B), and modulates actin dynamics to regulate neurite growth and/or spine morphogenesis. Also phosphorylates exocytosis associated proteins such as MCAM/MUC18, SEPT5, SYN1, and CDK16/PCTAIRE1 as well as endocytosis associated proteins such as DNM1, AMPH and SYNJ1 at synaptic terminals. In the mature central nervous system (CNS), regulates neurotransmitter movements by phosphorylating substrates associated with neurotransmitter release and synapse plasticity; synaptic vesicle exocytosis, vesicles fusion with the presynaptic membrane, and endocytosis. Promotes cell survival by activating anti-apoptotic proteins BCL2 and STAT3, and negatively regulating of JNK3/MAPK10 activity. Phosphorylation of p53/TP53 in response to genotoxic and oxidative stresses enhances its stabilization by preventing ubiquitin ligase-mediated proteasomal degradation, and induces transactivation of p53/TP53 target genes, thus regulating apoptosis. Phosphorylation of p35/CDK5R1 enhances its stabilization by preventing calpain-mediated proteolysis producing p25/CDK5R1 and avoiding ubiquitin ligase-mediated proteasomal degradation. During aberrant cell-cycle activity and DNA damage, p25/CDK5 activity elicits cell-cycle activity and double-strand DNA breaks that precedes neuronal death by deregulating HDAC1. DNA damage triggered phosphorylation of huntingtin/HTT in nuclei of neurons protects neurons against polyglutamine expansion as well as DNA damage mediated toxicity. Phosphorylation of PXN reduces its interaction with PTK2/FAK1 in matrix-cell focal adhesions (MCFA) during oligodendrocytes (OLs) differentiation. Negative regulator of Wnt/beta-catenin signaling pathway. Activator of the GAIT (IFN-gamma-activated inhibitor of translation) pathway, which suppresses expression of a post-transcriptional regulon of proinflammatory genes in myeloid cells; phosphorylates the linker domain of glutamyl-prolyl tRNA synthetase (EPRS) in a IFN-gamma-dependent manner, the initial event in assembly of the GAIT complex. Phosphorylation of SH3GLB1 is required for autophagy induction in starved neurons. Phosphorylation of TONEBP/NFAT5 in response to osmotic stress mediates its rapid nuclear localization. MEF2 is inactivated by phosphorylation in nucleus in response to neurotoxin, thus leading to neuronal apoptosis. APEX1 AP-endodeoxyribonuclease is repressed by phosphorylation, resulting in accumulation of DNA damage and contributing to neuronal death. NOS3 phosphorylation down regulates NOS3-derived nitrite (NO) levels. SRC phosphorylation mediates its ubiquitin-dependent degradation and thus leads to cytoskeletal reorganization. May regulate endothelial cell migration and angiogenesis via the modulation of lamellipodia formation. Involved in dendritic spine morphogenesis by mediating the EFNA1-EPHA4 signaling. The complex p35/CDK5 participates in the regulation of the circadian clock by modulating the function of CLOCK protein: phosphorylates CLOCK at 'Thr-451' and 'Thr-461' and regulates the transcriptional activity of the CLOCK-BMAL1 heterodimer in association with altered stability and subcellular distribution. This Rattus norvegicus (Rat) protein is Cyclin-dependent kinase 5.